A 508-amino-acid chain; its full sequence is Enhancer of mRNA-decapping protein 3 (508 aa).

The Sm domain occupies 1-68; it reads MAADWLGSIV…ITELKILEIP (68 aa). Residues 1-79 form a required for P-body targeting and interaction with DCP1A region; that stretch reads MAADWLGSIV…PGGNQHFGDV (79 aa). Residues 95-192 are disordered; it reads ISQNGTGKLV…QMKNKDDECF (98 aa). Phosphoserine occurs at positions 131, 138, 140, and 161. Residues 191–296 are required for interaction with DDX6; sequence CFGDDIEEIP…HKKLLSVAEK (106 aa). The 37-residue stretch at 192–228 folds into the DFDF domain; it reads FGDDIEEIPDTDFDFEGNLALFDKAAVFEEIGTYERR. The region spanning 283–487 is the YjeF N-terminal domain; the sequence is SYEQHKKLLS…DIGIPQQVFQ (205 aa).

The protein belongs to the EDC3 family. In terms of assembly, homodimer (via YjeF N-terminal domain). Forms a complex with DCP1A, DCP2, DDX6 and EDC4/HEDLS, within this complex directly interacts with DCP1A and DDX6. Interacts with ZFP36.

The protein localises to the cytoplasm. It is found in the P-body. Binds single-stranded RNA. Involved in the process of mRNA degradation and in the positive regulation of mRNA decapping. The sequence is that of Enhancer of mRNA-decapping protein 3 (EDC3) from Macaca fascicularis (Crab-eating macaque).